We begin with the raw amino-acid sequence, 593 residues long: UvrABC system protein C (593 aa).

A GIY-YIG domain is found at 14–91 (DSPGCYLHKD…IQENMPKYNI (78 aa)). Residues 196–231 (NKIVNGLTEKMKSAAMTMEFERAAEYRDLIEAISLL) enclose the UVR domain.

It belongs to the UvrC family. Interacts with UvrB in an incision complex.

The protein localises to the cytoplasm. In terms of biological role, the UvrABC repair system catalyzes the recognition and processing of DNA lesions. UvrC both incises the 5' and 3' sides of the lesion. The N-terminal half is responsible for the 3' incision and the C-terminal half is responsible for the 5' incision. The sequence is that of UvrABC system protein C from Streptococcus agalactiae serotype Ia (strain ATCC 27591 / A909 / CDC SS700).